Here is a 1091-residue protein sequence, read N- to C-terminus: Constitutive coactivator of PPAR-gamma-like protein 2 (1091 aa).

The span at 35-53 shows a compositional bias: low complexity; it reads QQQHLHRQLPPAALAPGAP. Disordered stretches follow at residues 35–105, 503–575, 966–1010, and 1037–1077; these read QQQH…HPPP, NCLT…SEPH, SRSS…QGSS, and VEEK…KNHV. R57 is modified (omega-N-methylarginine). The segment covering 82–95 has biased composition (basic residues); that stretch reads SRHHHPAHHFHHHG. Residues 532-544 are compositionally biased toward polar residues; that stretch reads GSEQITEAVQQQP. The segment covering 966–976 has biased composition (low complexity); the sequence is SRSSRSRGSFG. R972 bears the Omega-N-methylarginine mark. Over residues 1062–1077 the composition is skewed to basic and acidic residues; that stretch reads SDDHCLPVKNGEKNHV.

It belongs to the constitutive coactivator of PPAR-gamma family.

The sequence is that of Constitutive coactivator of PPAR-gamma-like protein 2 (Fam120c) from Mus musculus (Mouse).